A 257-amino-acid polypeptide reads, in one-letter code: Tryptophan synthase alpha chain (257 aa).

Residues Glu-51 and Asp-62 each act as proton acceptor in the active site.

The protein belongs to the TrpA family. Tetramer of two alpha and two beta chains.

It catalyses the reaction (1S,2R)-1-C-(indol-3-yl)glycerol 3-phosphate + L-serine = D-glyceraldehyde 3-phosphate + L-tryptophan + H2O. It participates in amino-acid biosynthesis; L-tryptophan biosynthesis; L-tryptophan from chorismate: step 5/5. The alpha subunit is responsible for the aldol cleavage of indoleglycerol phosphate to indole and glyceraldehyde 3-phosphate. The protein is Tryptophan synthase alpha chain of Nitratidesulfovibrio vulgaris (strain DP4) (Desulfovibrio vulgaris).